The primary structure comprises 550 residues: ATP-dependent RNA helicase MSS116, mitochondrial (550 aa).

Residues 1–11 are compositionally biased toward basic residues; that stretch reads MPPPPKRKWPN. A mitochondrion-targeting transit peptide spans 1 to 41; that stretch reads MPPPPKRKWPNRPRGGGGANGSASGTPTTPRSTVAQQPKRP. The disordered stretch occupies residues 1–51; it reads MPPPPKRKWPNRPRGGGGANGSASGTPTTPRSTVAQQPKRPKVEDAAPAAE. The short motif at 71 to 99 is the Q motif element; it reads FSELSSVLDKSLLDGLDKMGFEFMSPVQQ. A Helicase ATP-binding domain is found at 103–285; the sequence is TELPSLSSDC…KIVLFPGFTH (183 aa). 116–123 serves as a coordination point for ATP; the sequence is AKTGTGKT. The short motif at 230–233 is the DEAD box element; it reads DEAD. Residues 316 to 472 form the Helicase C-terminal domain; sequence ALSALIQEEH…KVPEQEAAIT (157 aa).

This sequence belongs to the DEAD box helicase family. DDX18/HAS1 subfamily.

Its subcellular location is the mitochondrion matrix. It carries out the reaction ATP + H2O = ADP + phosphate + H(+). Its function is as follows. ATP-dependent RNA helicase required for mitochondrial splicing of group I and II introns. Also required for efficient mitochondrial translation. The sequence is that of ATP-dependent RNA helicase MSS116, mitochondrial (MSS116) from Phaeosphaeria nodorum (strain SN15 / ATCC MYA-4574 / FGSC 10173) (Glume blotch fungus).